Here is an 853-residue protein sequence, read N- to C-terminus: Aminotransferase PigE (853 aa).

Residue 503–504 (GT) participates in pyridoxal 5'-phosphate binding. Residue K645 is modified to N6-(pyridoxal phosphate)lysine. Pyridoxal 5'-phosphate is bound at residue T680.

Belongs to the class-III pyridoxal-phosphate-dependent aminotransferase family. In terms of assembly, homodimer. The cofactor is pyridoxal 5'-phosphate.

Its pathway is antibiotic biosynthesis; prodigiosin biosynthesis. Functionally, involved in the biosynthesis of 2-methyl-3-n-amyl-pyrrole (MAP), one of the terminal products involved in the biosynthesis of the red antibiotic prodigiosin (Pig). Catalyzes the transamination to the aldehyde group of 3-acetyloctanal, resulting in an aminoketone, which spontaneously cyclizes to yield the dihydro form of MAP (H2MAP). The polypeptide is Aminotransferase PigE (Serratia sp. (strain ATCC 39006) (Prodigiosinella confusarubida)).